The following is a 203-amino-acid chain: Outer-membrane lipoprotein carrier protein (203 aa).

The first 21 residues, 1–21 (MKKMAIACALLSSVVASSVWA), serve as a signal peptide directing secretion. Positions 178–203 (QQNGAVDPSKFTFTPPQGVTIDDQRK) are disordered.

Belongs to the LolA family. Monomer.

It localises to the periplasm. In terms of biological role, participates in the translocation of lipoproteins from the inner membrane to the outer membrane. Only forms a complex with a lipoprotein if the residue after the N-terminal Cys is not an aspartate (The Asp acts as a targeting signal to indicate that the lipoprotein should stay in the inner membrane). This chain is Outer-membrane lipoprotein carrier protein, found in Salmonella agona (strain SL483).